The primary structure comprises 311 residues: N-acetylmuramic acid 6-phosphate etherase (311 aa).

The SIS domain occupies isoleucine 64–lysine 227. The active-site Proton donor is glutamate 92. Residue glutamate 123 is part of the active site.

The protein belongs to the GCKR-like family. MurNAc-6-P etherase subfamily. As to quaternary structure, homodimer.

It catalyses the reaction N-acetyl-D-muramate 6-phosphate + H2O = N-acetyl-D-glucosamine 6-phosphate + (R)-lactate. It functions in the pathway amino-sugar metabolism; N-acetylmuramate degradation. Functionally, specifically catalyzes the cleavage of the D-lactyl ether substituent of MurNAc 6-phosphate, producing GlcNAc 6-phosphate and D-lactate. The chain is N-acetylmuramic acid 6-phosphate etherase from Prochlorococcus marinus (strain SARG / CCMP1375 / SS120).